Here is a 349-residue protein sequence, read N- to C-terminus: Phenylalanine--tRNA ligase alpha subunit (349 aa).

Glutamate 262 is a Mg(2+) binding site.

It belongs to the class-II aminoacyl-tRNA synthetase family. Phe-tRNA synthetase alpha subunit type 1 subfamily. As to quaternary structure, tetramer of two alpha and two beta subunits. It depends on Mg(2+) as a cofactor.

It is found in the cytoplasm. It carries out the reaction tRNA(Phe) + L-phenylalanine + ATP = L-phenylalanyl-tRNA(Phe) + AMP + diphosphate + H(+). This chain is Phenylalanine--tRNA ligase alpha subunit, found in Sorangium cellulosum (strain So ce56) (Polyangium cellulosum (strain So ce56)).